The following is a 121-amino-acid chain: Putative membrane protein insertion efficiency factor (121 aa).

The segment at 97 to 121 (VPARRDRHAGGRRCCPANVDEQRST) is disordered.

Belongs to the UPF0161 family.

It localises to the cell membrane. Could be involved in insertion of integral membrane proteins into the membrane. This Rhodococcus jostii (strain RHA1) protein is Putative membrane protein insertion efficiency factor.